A 243-amino-acid chain; its full sequence is 1-(5-phosphoribosyl)-5-[(5-phosphoribosylamino)methylideneamino] imidazole-4-carboxamide isomerase (243 aa).

D10 functions as the Proton acceptor in the catalytic mechanism. D128 acts as the Proton donor in catalysis.

It belongs to the HisA/HisF family.

It is found in the cytoplasm. The enzyme catalyses 1-(5-phospho-beta-D-ribosyl)-5-[(5-phospho-beta-D-ribosylamino)methylideneamino]imidazole-4-carboxamide = 5-[(5-phospho-1-deoxy-D-ribulos-1-ylimino)methylamino]-1-(5-phospho-beta-D-ribosyl)imidazole-4-carboxamide. It participates in amino-acid biosynthesis; L-histidine biosynthesis; L-histidine from 5-phospho-alpha-D-ribose 1-diphosphate: step 4/9. This Helicobacter hepaticus (strain ATCC 51449 / 3B1) protein is 1-(5-phosphoribosyl)-5-[(5-phosphoribosylamino)methylideneamino] imidazole-4-carboxamide isomerase.